Reading from the N-terminus, the 200-residue chain is Glycerol-3-phosphate acyltransferase (200 aa).

Helical transmembrane passes span 1–21, 53–73, 81–101, 114–134, and 139–159; these read MLLSSLLLLALGYLLGSMPNG, GPALVVFLLDVGKGALAVLLA, WVQVLAGLAALAGHIWPVWLG, MFLGLAWPVGLACLGLFMAVI, and IVSLSSVVAAIGLPVLMLTSG.

This sequence belongs to the PlsY family. Probably interacts with PlsX.

It is found in the cell inner membrane. It catalyses the reaction an acyl phosphate + sn-glycerol 3-phosphate = a 1-acyl-sn-glycero-3-phosphate + phosphate. The protein operates within lipid metabolism; phospholipid metabolism. In terms of biological role, catalyzes the transfer of an acyl group from acyl-phosphate (acyl-PO(4)) to glycerol-3-phosphate (G3P) to form lysophosphatidic acid (LPA). This enzyme utilizes acyl-phosphate as fatty acyl donor, but not acyl-CoA or acyl-ACP. This Synechococcus sp. (strain CC9902) protein is Glycerol-3-phosphate acyltransferase.